The following is a 278-amino-acid chain: Pantothenate synthetase (278 aa).

Met-28 to His-35 is an ATP binding site. Catalysis depends on His-35, which acts as the Proton donor. Gln-59 contacts (R)-pantoate. Gln-59 serves as a coordination point for beta-alanine. Gly-145–Asp-148 is an ATP binding site. Gln-151 provides a ligand contact to (R)-pantoate. Leu-182–Arg-185 provides a ligand contact to ATP.

Belongs to the pantothenate synthetase family. Homodimer.

Its subcellular location is the cytoplasm. The enzyme catalyses (R)-pantoate + beta-alanine + ATP = (R)-pantothenate + AMP + diphosphate + H(+). Its pathway is cofactor biosynthesis; (R)-pantothenate biosynthesis; (R)-pantothenate from (R)-pantoate and beta-alanine: step 1/1. Its function is as follows. Catalyzes the condensation of pantoate with beta-alanine in an ATP-dependent reaction via a pantoyl-adenylate intermediate. This chain is Pantothenate synthetase, found in Methylobacillus flagellatus (strain ATCC 51484 / DSM 6875 / VKM B-1610 / KT).